We begin with the raw amino-acid sequence, 634 residues long: Probable potassium transport system protein Kup (634 aa).

Helical transmembrane passes span 21 to 41 (LVIG…LYTL), 58 to 78 (VLGI…LKYV), 110 to 130 (MYVV…DGVI), 152 to 172 (PFVV…QRFG), 179 to 199 (AFGP…VYNM), 223 to 243 (WHAV…EALY), 258 to 278 (WQFV…ALML), 296 to 316 (ALYP…QALI), 348 to 368 (IYVP…VIGF), 377 to 397 (AYGV…IIYA), 403 to 423 (VPAP…CAFF), and 427 to 447 (IIKF…LFTL).

Belongs to the HAK/KUP transporter (TC 2.A.72) family.

Its subcellular location is the cell inner membrane. It carries out the reaction K(+)(in) + H(+)(in) = K(+)(out) + H(+)(out). Its function is as follows. Transport of potassium into the cell. Likely operates as a K(+):H(+) symporter. This is Probable potassium transport system protein Kup from Xanthomonas euvesicatoria pv. vesicatoria (strain 85-10) (Xanthomonas campestris pv. vesicatoria).